Consider the following 277-residue polypeptide: Pristinamycin IIA synthase subunit B (277 aa).

In terms of assembly, heterodimer of two subunits, SnaA and SnaB. It depends on FMN as a cofactor.

Its function is as follows. Catalyzes the oxidation of the proline residue of pristinamycin IIB (PIIB) to pristinamycin IIA (PIIA). The chain is Pristinamycin IIA synthase subunit B (snaB) from Streptomyces pristinaespiralis.